A 447-amino-acid polypeptide reads, in one-letter code: Phosphoglucosamine mutase (447 aa).

The active-site Phosphoserine intermediate is S88. Mg(2+) is bound by residues S88, D231, D233, and D235. Residue S88 is modified to Phosphoserine.

The protein belongs to the phosphohexose mutase family. It depends on Mg(2+) as a cofactor. In terms of processing, activated by phosphorylation.

It catalyses the reaction alpha-D-glucosamine 1-phosphate = D-glucosamine 6-phosphate. Its function is as follows. Catalyzes the conversion of glucosamine-6-phosphate to glucosamine-1-phosphate. This is Phosphoglucosamine mutase from Methanococcus maripaludis (strain C7 / ATCC BAA-1331).